Here is a 337-residue protein sequence, read N- to C-terminus: Anthranilate phosphoribosyltransferase (337 aa).

5-phospho-alpha-D-ribose 1-diphosphate contacts are provided by residues G80, 83-84 (GD), T88, 90-93 (NIST), 108-116 (KHGNRAVSS), and S120. G80 provides a ligand contact to anthranilate. S92 is a binding site for Mg(2+). N111 provides a ligand contact to anthranilate. Residue R166 coordinates anthranilate. Residues D224 and E225 each contribute to the Mg(2+) site.

It belongs to the anthranilate phosphoribosyltransferase family. In terms of assembly, homodimer. Mg(2+) is required as a cofactor.

The enzyme catalyses N-(5-phospho-beta-D-ribosyl)anthranilate + diphosphate = 5-phospho-alpha-D-ribose 1-diphosphate + anthranilate. The protein operates within amino-acid biosynthesis; L-tryptophan biosynthesis; L-tryptophan from chorismate: step 2/5. Its function is as follows. Catalyzes the transfer of the phosphoribosyl group of 5-phosphorylribose-1-pyrophosphate (PRPP) to anthranilate to yield N-(5'-phosphoribosyl)-anthranilate (PRA). This chain is Anthranilate phosphoribosyltransferase, found in Anaeromyxobacter dehalogenans (strain 2CP-1 / ATCC BAA-258).